We begin with the raw amino-acid sequence, 158 residues long: Transcriptional repressor NrdR (158 aa).

Residues 3–34 (CPSCQNTDSRVLESRAADAGRSVRRRRECLHC) fold into a zinc finger. Positions 49 to 139 (ITVLKRNGNR…VYRDFRGVND (91 aa)) constitute an ATP-cone domain.

It belongs to the NrdR family. It depends on Zn(2+) as a cofactor.

Functionally, negatively regulates transcription of bacterial ribonucleotide reductase nrd genes and operons by binding to NrdR-boxes. This Prochlorococcus marinus (strain MIT 9313) protein is Transcriptional repressor NrdR.